Here is a 367-residue protein sequence, read N- to C-terminus: uncharacterized protein (367 aa).

The FAD-binding PCMH-type domain occupies 1–96; the sequence is ITLHRLAELV…LTATLQLQPV (96 aa).

This sequence to M.tuberculosis Rv3790.

This is an uncharacterized protein from Streptomyces coelicolor.